We begin with the raw amino-acid sequence, 258 residues long: Regulatory protein RecX (258 aa).

The protein belongs to the RecX family.

It is found in the cytoplasm. In terms of biological role, modulates RecA activity. This chain is Regulatory protein RecX, found in Streptococcus pneumoniae (strain P1031).